The following is a 134-amino-acid chain: Retinol-binding protein 2 (134 aa).

All-trans-retinol contacts are provided by Lys-41 and Gln-109.

It belongs to the calycin superfamily. Fatty-acid binding protein (FABP) family. Higher expression in adult small intestine and to a much lesser extent in fetal kidney.

It is found in the cytoplasm. Functionally, intracellular transport of retinol. The chain is Retinol-binding protein 2 (RBP2) from Homo sapiens (Human).